We begin with the raw amino-acid sequence, 524 residues long: Na(+)/H(+) antiporter NhaB (524 aa).

A run of 13 helical transmembrane segments spans residues 23–43, 45–65, 98–118, 136–156, 203–223, 239–259, 304–324, 325–345, 358–378, 392–412, 420–440, 448–468, and 479–499; these read LAII…SPFV, GWML…CYPL, LLLI…LFIF, CVAS…AVVI, LMMH…VGEP, FFMR…LVCI, ALIG…VGLV, GLSV…HALG, LTVF…TPII, LFYL…VGTV, AFEL…AINT, ATPN…APLI, and ALPY…YLLV.

This sequence belongs to the NhaB Na(+)/H(+) (TC 2.A.34) antiporter family.

Its subcellular location is the cell inner membrane. It carries out the reaction 2 Na(+)(in) + 3 H(+)(out) = 2 Na(+)(out) + 3 H(+)(in). Its function is as follows. Na(+)/H(+) antiporter that extrudes sodium in exchange for external protons. In Yersinia enterocolitica serotype O:8 / biotype 1B (strain NCTC 13174 / 8081), this protein is Na(+)/H(+) antiporter NhaB.